The following is a 205-amino-acid chain: Outer-membrane lipoprotein LolB (205 aa).

The first 17 residues, 1 to 17 (MFLRHCITFTLIALLAG), serve as a signal peptide directing secretion. A lipid anchor (N-palmitoyl cysteine) is attached at C18. C18 carries the S-diacylglycerol cysteine lipid modification.

This sequence belongs to the LolB family. Monomer.

It is found in the cell outer membrane. Plays a critical role in the incorporation of lipoproteins in the outer membrane after they are released by the LolA protein. The protein is Outer-membrane lipoprotein LolB of Pseudomonas putida (strain ATCC 47054 / DSM 6125 / CFBP 8728 / NCIMB 11950 / KT2440).